The following is a 1300-amino-acid chain: MAVPALWPWGVHLLMSLLSLGSGLDTLEVCPSLDIRSEVTELRRLENCSVVEGHLQILLMFAATGEDFRGLSFPRLTQVTDYLLLFRVYGLESLRDLFPNLTVIRGTRLFLGYALIIFEMPHLRDVGLPSLGAVLRGAVRVEKNQELCHLSTIDWGLLQPAPGTNHIVGNKLGEECADVCPGVLGAAGEPCSRTTFSGRTDYRCWTSSHCQKVCPCPRGMACTAGGDCCHSECLGGCSQPEDPRACVACRHLYFQGVCLRACPPGTYQYESWRCVTAELCAHLREVPGLATTFGIYEGSCLAQCPPGFTRNGSSIFCHKCEGLCPKECKVGTKTIDSVQATQDLVGCTHVEGNLILNLRQGYNLEPELQRNLGLVETITGFLKIKHSFALVTLGFFKNLKLIRGDSMVDGNYTLYVLDNQNLQQLGSWVTAGLTIPVGKIYFAFNPRLCLEHIYQLEEVTGTRGRQSKAEINPRTNGDRAACQTRTLRFVFNLTEEDRILLRWERYEPLEARDLLSFIVYYKESPFQNATEHVGPDACGTQSWNLLDVELPLSRTQEPGVTLAPLKPWTQYAVFVRAITLTTAEDSPHQGAQSPIVYLRTLPAAPTVPQDVISTSNSSSHLLVRWKPPVQRNGNITYYLVLWQRLAEDGDLYINDYCHRGLRLPTSSHDTRFDREDPALEAEPEQGCCPCQHSPPGQALPALEAQEVTFQKKFENFLHHAITIPKAPWKVTSINKNPQRDSERHRREAGLLRLGKNNSDFEIQEDKVPRERAILSGLRHFTEYRIDIHACNHAAHTVGCSAATFVFARTMPHREADGIPGKVAWKAAGKSSVTLHWLEPPDPNGLILKYEIKYRRLGEEATVLCVSRLRYAKVGGVHLALLPPGNYSAKVRATSLAGNGSWTDGVTFYITDLEEEDTGGMRIFLTVTPVGFMLLVTLAALGFFYSRKRNSTLYTSVNPEYFSASHMYVPDEWEVPREQIAIIRELGQGSFGMVYEGLARGLEAGEESTPVALKTVNELASARERVEFLKEASVMKAFKCHHVVRLLGVVSQGQPTLVIMELMTRGDLKSHLRSLRPEAENNPGLPQPALSDMIQMAGEIADGMAYLAAKKFVHRDLAARNCMVSQDFTVKIGDFGMTRDVYETDYYRKGGKGLLPVRWMAPESLKDGIFTTHSDVWSFGVVLWEIVTLAEQPYQGLSNEQVLKFVMDGGVLEELENCPIQLQELMRLCWQHSPRLRPTFVHILDRIQDELRPSFRLCSFYYSPECQRGQASLLPTEAEPDSPPTLNGASDYSAPNGGPGH.

The N-terminal stretch at 1-26 (MAVPALWPWGVHLLMSLLSLGSGLDT) is a signal peptide. Residues Asn-47 and Asn-100 are each glycosylated (N-linked (GlcNAc...) asparagine). Cystine bridges form between Cys-214–Cys-222, Cys-216–Cys-228, Cys-229–Cys-237, Cys-233–Cys-246, Cys-249–Cys-258, Cys-262–Cys-274, Cys-280–Cys-300, Cys-304–Cys-317, and Cys-320–Cys-324. Asn-311 is a glycosylation site (N-linked (GlcNAc...) asparagine). 8 N-linked (GlcNAc...) asparagine glycosylation sites follow: Asn-411, Asn-492, Asn-528, Asn-616, Asn-634, Asn-756, Asn-885, and Asn-898. Fibronectin type-III domains lie at 483–603 (QTRT…TLPA) and 607–707 (VPQD…AQEV). A disulfide bridge connects residues Cys-657 and Cys-864. Residues 747–921 (EAGLLRLGKN…LEEEDTGGMR (175 aa)) are Extracellular-facing. One can recognise a Fibronectin type-III 3 domain in the interval 818-913 (IPGKVAWKAA…GVTFYITDLE (96 aa)). The chain crosses the membrane as a helical span at residues 922-943 (IFLTVTPVGFMLLVTLAALGFF). The Cytoplasmic segment spans residues 944–1300 (YSRKRNSTLY…YSAPNGGPGH (357 aa)). The Protein kinase domain occupies 979–1254 (IAIIRELGQG…RIQDELRPSF (276 aa)). Residues 985-993 (LGQGSFGMV) and Lys-1013 each bind ATP. The Proton acceptor role is filled by Asp-1115. Residues Tyr-1145 and Tyr-1146 each carry the phosphotyrosine; by autocatalysis modification. The disordered stretch occupies residues 1273–1300 (LPTEAEPDSPPTLNGASDYSAPNGGPGH).

Belongs to the protein kinase superfamily. Tyr protein kinase family. Insulin receptor subfamily. As to quaternary structure, probable tetramer of 2 alpha and 2 beta chains linked by disulfide bonds. The alpha chains contribute to the formation of the ligand-binding domain, while the beta chains carry the kinase domain. Post-translationally, autophosphorylated on tyrosine residues between pH 7.9 and pH 10.5. In terms of tissue distribution, highly expressed in the islets as well as in pancreatic beta-cells.

The protein localises to the membrane. It catalyses the reaction L-tyrosyl-[protein] + ATP = O-phospho-L-tyrosyl-[protein] + ADP + H(+). Functionally, receptor with tyrosine-protein kinase activity. Functions as a pH sensing receptor which is activated by increased extracellular pH. Activates an intracellular signaling pathway that involves IRS1 and AKT1/PKB. The polypeptide is Insulin receptor-related protein (Insrr) (Mus musculus (Mouse)).